The following is a 767-amino-acid chain: Serine/threonine-protein kinase DCLK2 (767 aa).

Residues Met1 to Leu44 form a disordered region. The span at Ile7–Pro19 shows a compositional bias: basic and acidic residues. Positions Arg24–Gly43 are enriched in low complexity. At Thr61 the chain carries Phosphothreonine. 2 Doublecortin domains span residues Lys72–Thr158 and Lys196–Asp279. Residues Lys301–Ser311 show a composition bias toward low complexity. The segment at Lys301–Pro391 is disordered. Polar residues predominate over residues Ser327–Gly338. Over residues Thr339–Ser362 the composition is skewed to low complexity. Over residues Ile369–Asn380 the composition is skewed to polar residues. Ser377 is modified (phosphoserine). One can recognise a Protein kinase domain in the interval Tyr409–Val666. Residues Ile415 to Val423 and Lys438 each bind ATP. Asp530 serves as the catalytic Proton acceptor. Ser662 carries the phosphoserine modification. The residue at position 681 (Thr681) is a Phosphothreonine. A compositionally biased stretch (basic and acidic residues) spans His721–Ser734. The disordered stretch occupies residues His721 to Asp767. Residues Ala738–Pro751 show a composition bias toward pro residues.

This sequence belongs to the protein kinase superfamily. CAMK Ser/Thr protein kinase family. CaMK subfamily. As to quaternary structure, interacts with MAPK8IP1/JIP-1, MAPK8IP2/JIP-2, MAPK9/JNK2, PPP1R9B/NEURABIN-2 and actin. Binds to and stabilizes microtubules; binding affinity is strongly reduced by autophosphorylation. Autophosphorylated.

It localises to the cytoplasm. Its subcellular location is the cytoskeleton. It carries out the reaction L-seryl-[protein] + ATP = O-phospho-L-seryl-[protein] + ADP + H(+). The catalysed reaction is L-threonyl-[protein] + ATP = O-phospho-L-threonyl-[protein] + ADP + H(+). Its function is as follows. Protein kinase with a significantly reduced Ca(2+)+/CAM affinity and dependence compared to other members of the CaMK family. May play a role in the down-regulation of CRE-dependent gene activation probably by phosphorylation of the CREB coactivator CRTC2/TORC2 and the resulting retention of TORC2 in the cytoplasm. The sequence is that of Serine/threonine-protein kinase DCLK2 (Dclk2) from Rattus norvegicus (Rat).